The chain runs to 140 residues: Large ribosomal subunit protein uL11 (140 aa).

The protein belongs to the universal ribosomal protein uL11 family. As to quaternary structure, part of the ribosomal stalk of the 50S ribosomal subunit. Interacts with L10 and the large rRNA to form the base of the stalk. L10 forms an elongated spine to which L12 dimers bind in a sequential fashion forming a multimeric L10(L12)X complex. In terms of processing, one or more lysine residues are methylated.

In terms of biological role, forms part of the ribosomal stalk which helps the ribosome interact with GTP-bound translation factors. This Dehalococcoides mccartyi (strain ATCC BAA-2100 / JCM 16839 / KCTC 5957 / BAV1) protein is Large ribosomal subunit protein uL11.